We begin with the raw amino-acid sequence, 169 residues long: NADH-quinone oxidoreductase subunit B (169 aa).

4 residues coordinate [4Fe-4S] cluster: cysteine 42, cysteine 43, cysteine 107, and cysteine 136.

It belongs to the complex I 20 kDa subunit family. NDH-1 is composed of 14 different subunits. Subunits NuoB, C, D, E, F, and G constitute the peripheral sector of the complex. The cofactor is [4Fe-4S] cluster.

It localises to the cell inner membrane. It catalyses the reaction a quinone + NADH + 5 H(+)(in) = a quinol + NAD(+) + 4 H(+)(out). Its function is as follows. NDH-1 shuttles electrons from NADH, via FMN and iron-sulfur (Fe-S) centers, to quinones in the respiratory chain. The immediate electron acceptor for the enzyme in this species is believed to be ubiquinone. Couples the redox reaction to proton translocation (for every two electrons transferred, four hydrogen ions are translocated across the cytoplasmic membrane), and thus conserves the redox energy in a proton gradient. In Sulfurimonas denitrificans (strain ATCC 33889 / DSM 1251) (Thiomicrospira denitrificans (strain ATCC 33889 / DSM 1251)), this protein is NADH-quinone oxidoreductase subunit B.